The chain runs to 193 residues: 3-isopropylmalate dehydratase small subunit (193 aa).

The protein belongs to the LeuD family. LeuD type 1 subfamily. In terms of assembly, heterodimer of LeuC and LeuD.

The catalysed reaction is (2R,3S)-3-isopropylmalate = (2S)-2-isopropylmalate. The protein operates within amino-acid biosynthesis; L-leucine biosynthesis; L-leucine from 3-methyl-2-oxobutanoate: step 2/4. Functionally, catalyzes the isomerization between 2-isopropylmalate and 3-isopropylmalate, via the formation of 2-isopropylmaleate. The chain is 3-isopropylmalate dehydratase small subunit from Listeria innocua serovar 6a (strain ATCC BAA-680 / CLIP 11262).